Reading from the N-terminus, the 212-residue chain is uncharacterized protein (212 aa).

Disordered stretches follow at residues 1–25 (MARK…GRPN) and 165–212 (STSG…HWGG). A compositionally biased stretch (low complexity) spans 202–212 (RSSSARGHWGG).

This is an uncharacterized protein from Escherichia coli (strain K12).